The sequence spans 420 residues: Putative transporter AmpG 3 (420 aa).

12 helical membrane-spanning segments follow: residues 6 to 26 (YLIG…LIFF), 41 to 61 (IVGS…WSPF), 79 to 99 (GWAL…LKRS), 104 to 124 (LCIT…QDIV), 141 to 161 (IAFT…SVGA), 166 to 186 (IIFG…VGPI), 230 to 250 (LLLI…PMAM), 274 to 294 (LLIM…IGIF), 297 to 317 (VLIG…LATI), 324 to 344 (FIIT…IISI), 359 to 381 (YSIS…GICA), and 386 to 406 (WPVF…IFYI).

Belongs to the major facilitator superfamily.

Its subcellular location is the cell inner membrane. The polypeptide is Putative transporter AmpG 3 (ampG3) (Rickettsia typhi (strain ATCC VR-144 / Wilmington)).